An 80-amino-acid polypeptide reads, in one-letter code: Putative membrane protein insertion efficiency factor (80 aa).

The protein belongs to the UPF0161 family.

Its subcellular location is the cell membrane. Could be involved in insertion of integral membrane proteins into the membrane. In Corynebacterium jeikeium (strain K411), this protein is Putative membrane protein insertion efficiency factor.